The chain runs to 154 residues: Ribosomal RNA-processing protein 14-N (154 aa).

The tract at residues 36–154 (WKQKKSTLEE…KHKASPRAGF (119 aa)) is disordered. At serine 80 the chain carries Phosphoserine. Threonine 83 carries the post-translational modification Phosphothreonine. Basic and acidic residues predominate over residues 105–133 (QDLREKRKAGDLNQKRQNKRPVENEKDSQ). The segment covering 140–154 (KVQKKKHKASPRAGF) has biased composition (basic residues).

This sequence belongs to the SURF6 family.

Its subcellular location is the nucleus. It localises to the nucleolus. Functionally, involved in ribosome biogenesis and cell polarity. Required for the synthesis of both 40S and 60S ribosomal subunits and may also play some direct role in correct positioning of the mitotic spindle during mitosis. The sequence is that of Ribosomal RNA-processing protein 14-N (rrp14n) from Schizosaccharomyces pombe (strain 972 / ATCC 24843) (Fission yeast).